A 570-amino-acid polypeptide reads, in one-letter code: Coiled-coil domain-containing protein 22 homolog (570 aa).

2 disordered regions span residues 110-129 (RQSEDDANRTSHPLSSREQL) and 234-280 (LTST…PLEL). Polar residues predominate over residues 248 to 257 (TSPTQTSTTA). Residues 265 to 276 (SSEATATSTTTT) are compositionally biased toward low complexity. Coiled-coil stretches lie at residues 308–471 (ELKI…LQRQ) and 529–570 (GEKL…ITVG).

This sequence belongs to the CCDC22 family.

The protein is Coiled-coil domain-containing protein 22 homolog of Drosophila willistoni (Fruit fly).